A 783-amino-acid polypeptide reads, in one-letter code: Type 4 coupling protein DotL (783 aa).

The chain crosses the membrane as a helical span at residues 47-67 (VSYYFSEAATFLLIMGGIFFL). Residues 100–500 (NIARGITFFG…ICMKLEDPTE (401 aa)) form an ATPase domain region. The interval 671-773 (VEGALTIFSK…SAKISAEREK (103 aa)) is interaction with IcmS/IcmW.

The T4BSS is a complex nanomachine composed of several subcomplexes. This subunit is part of the Type IV Coupling Complex (T4CC), a subcomplex composed of the DotLMNYZ core and the IcmSW-LvgA adapter subunits, linked by the C-terminal tail of DotL. Six DotLMNYZ hetero-pentameric units may assemble into a hexameric nanomachine, forming an inner membrane channel for effectors to pass through. Interacts directly with DotM. Interacts directly, via its C-terminal region, with the type IV adapter proteins IcmS and IcmW. Also interacts with DotN and LvgA via its C-terminal region.

It localises to the cell inner membrane. Component of the Dot/Icm type IVB secretion system (T4BSS), which is used to inject bacterial effector proteins into eukaryotic host cells. Part of a subcomplex which recruits effector proteins and delivers them to the core transmembrane subcomplex. Plays a central role in the assembly of the subcomplex. Required for the recruitment of IcmS and IcmW to the inner membrane and for the translocation of adapter-dependent substrates. May have ATPase activity. The sequence is that of Type 4 coupling protein DotL from Legionella pneumophila subsp. pneumophila (strain Philadelphia 1 / ATCC 33152 / DSM 7513).